Consider the following 176-residue polypeptide: uncharacterized protein (176 aa).

This is an uncharacterized protein from Treponema pallidum (strain Nichols).